Reading from the N-terminus, the 58-residue chain is Small ribosomal subunit protein bS21 (58 aa).

A disordered region spans residues 35–58 (REHYEKPSVKRKKKSEAARKRKFK). Basic residues predominate over residues 43–58 (VKRKKKSEAARKRKFK).

This sequence belongs to the bacterial ribosomal protein bS21 family.

The chain is Small ribosomal subunit protein bS21 from Ruminiclostridium cellulolyticum (strain ATCC 35319 / DSM 5812 / JCM 6584 / H10) (Clostridium cellulolyticum).